A 1020-amino-acid chain; its full sequence is Tetrathionate reductase subunit A (1020 aa).

Residues 1 to 33 constitute a signal peptide (tat-type signal); the sequence is MANLTRRQWLKVGLAVGGMVTFGLSYRDVAKRA. The 84-residue stretch at 71-154 folds into the 4Fe-4S Mo/W bis-MGD-type domain; it reads QTIAMTQCFG…TLLESLYSPL (84 aa). [4Fe-4S] cluster-binding residues include C78, C81, C85, and C140.

The protein belongs to the prokaryotic molybdopterin-containing oxidoreductase family. In terms of assembly, probably composed of three subunits: TtrA, TtrB and TtrC. The cofactor is [4Fe-4S] cluster. Requires Mo-bis(molybdopterin guanine dinucleotide) as cofactor. Predicted to be exported by the Tat system. The position of the signal peptide cleavage has not been experimentally proven.

The protein resides in the periplasm. Its subcellular location is the cell inner membrane. Functionally, part of a membrane-bound tetrathionate reductase that catalyzes the reduction of tetrathionate to thiosulfate. TtrA is the catalytic subunit. During mice infection, the ability to use tetrathionate as an electron acceptor is a growth advantage for S.typhimurium over the competing microbiota in the lumen of the inflamed gut. The polypeptide is Tetrathionate reductase subunit A (ttrA) (Salmonella typhimurium (strain LT2 / SGSC1412 / ATCC 700720)).